Here is a 190-residue protein sequence, read N- to C-terminus: Large ribosomal subunit protein uL5 (190 aa).

It belongs to the universal ribosomal protein uL5 family. As to quaternary structure, part of the 50S ribosomal subunit; part of the 5S rRNA/L5/L18/L25 subcomplex. Contacts the 5S rRNA and the P site tRNA. Forms a bridge to the 30S subunit in the 70S ribosome.

Its function is as follows. This is one of the proteins that bind and probably mediate the attachment of the 5S RNA into the large ribosomal subunit, where it forms part of the central protuberance. In the 70S ribosome it contacts protein S13 of the 30S subunit (bridge B1b), connecting the 2 subunits; this bridge is implicated in subunit movement. Contacts the P site tRNA; the 5S rRNA and some of its associated proteins might help stabilize positioning of ribosome-bound tRNAs. In Corynebacterium efficiens (strain DSM 44549 / YS-314 / AJ 12310 / JCM 11189 / NBRC 100395), this protein is Large ribosomal subunit protein uL5.